The following is a 213-amino-acid chain: Pyridoxine/pyridoxamine 5'-phosphate oxidase (213 aa).

Residues 57-62 (RIVLLR), 77-78 (FT), Arg83, Lys84, and Gln106 contribute to the FMN site. Arg62 is a binding site for substrate. Tyr124, Arg128, and Ser132 together coordinate substrate. The interval 135–163 (GARASDQSRPLPDRKTLQKRVEEEEARYP) is disordered. 141–142 (QS) contacts FMN. Positions 145 to 163 (LPDRKTLQKRVEEEEARYP) are enriched in basic and acidic residues. Trp186 serves as a coordination point for FMN. Residue 192 to 194 (RLH) participates in substrate binding. Residue Arg196 coordinates FMN.

The protein belongs to the pyridoxamine 5'-phosphate oxidase family. Homodimer. Requires FMN as cofactor.

The enzyme catalyses pyridoxamine 5'-phosphate + O2 + H2O = pyridoxal 5'-phosphate + H2O2 + NH4(+). The catalysed reaction is pyridoxine 5'-phosphate + O2 = pyridoxal 5'-phosphate + H2O2. It functions in the pathway cofactor metabolism; pyridoxal 5'-phosphate salvage; pyridoxal 5'-phosphate from pyridoxamine 5'-phosphate: step 1/1. It participates in cofactor metabolism; pyridoxal 5'-phosphate salvage; pyridoxal 5'-phosphate from pyridoxine 5'-phosphate: step 1/1. Its function is as follows. Catalyzes the oxidation of either pyridoxine 5'-phosphate (PNP) or pyridoxamine 5'-phosphate (PMP) into pyridoxal 5'-phosphate (PLP). The chain is Pyridoxine/pyridoxamine 5'-phosphate oxidase from Granulibacter bethesdensis (strain ATCC BAA-1260 / CGDNIH1).